The chain runs to 154 residues: Ribonuclease H (154 aa).

One can recognise an RNase H type-1 domain in the interval Met-1 to Leu-142. Residues Asp-10, Glu-48, Asp-70, and Asp-134 each coordinate Mg(2+).

It belongs to the RNase H family. Monomer. Requires Mg(2+) as cofactor.

It localises to the cytoplasm. The enzyme catalyses Endonucleolytic cleavage to 5'-phosphomonoester.. Functionally, endonuclease that specifically degrades the RNA of RNA-DNA hybrids. The sequence is that of Ribonuclease H from Tolumonas auensis (strain DSM 9187 / NBRC 110442 / TA 4).